Reading from the N-terminus, the 85-residue chain is Beta-insect depressant toxin Lqh-dprIT3g (85 aa).

Positions 1-21 are cleaved as a signal peptide; the sequence is MKLLLLLTISASMLIEGLVNA. An LCN-type CS-alpha/beta domain is found at 22-82; it reads DGYIRGGDGC…EWDYETDTCG (61 aa). 4 disulfides stabilise this stretch: Cys31-Cys81, Cys35-Cys56, Cys42-Cys63, and Cys46-Cys65. Gly82 is modified (glycine amide).

This sequence belongs to the long (4 C-C) scorpion toxin superfamily. Sodium channel inhibitor family. Beta subfamily. Expressed by the venom gland.

The protein localises to the secreted. Functionally, depressant insect beta-toxins cause a transient contraction paralysis followed by a slow flaccid paralysis. They bind voltage-independently at site-4 of sodium channels (Nav) and block action potentials, primarily by depolarizing the axonal membrane and suppressing the sodium current. This depressant toxin is active only on insects. It is found in a relatively small amount in the venom. In Leiurus hebraeus (Hebrew deathstalker scorpion), this protein is Beta-insect depressant toxin Lqh-dprIT3g.